The following is a 208-amino-acid chain: MSAKGGTIKDKWKMKKWYSIIAPKVFGEVSLGSTPAYDVTQTIGRRVETTLYDLTGDFSQVYVHLYFKIVSNEGDRLITRFVGHELSRDYLRSLIRRKSSKVNSVFDVTTKDGYVVRVKGLVLTTYKCHQSQKTAIRKIINETISKKASELTFDDFTQEVVFGRLANEIFEATKKIYPLRKAEIEKTKVLKVPENLGKQVESSSVSSG.

It belongs to the eukaryotic ribosomal protein eS1 family.

This Saccharolobus islandicus (strain Y.N.15.51 / Yellowstone #2) (Sulfolobus islandicus) protein is Small ribosomal subunit protein eS1.